A 223-amino-acid polypeptide reads, in one-letter code: Uracil-DNA glycosylase (223 aa).

D67 serves as the catalytic Proton acceptor.

The protein belongs to the uracil-DNA glycosylase (UDG) superfamily. UNG family.

The protein localises to the cytoplasm. It catalyses the reaction Hydrolyzes single-stranded DNA or mismatched double-stranded DNA and polynucleotides, releasing free uracil.. Excises uracil residues from the DNA which can arise as a result of misincorporation of dUMP residues by DNA polymerase or due to deamination of cytosine. This is Uracil-DNA glycosylase from Borrelia duttonii (strain Ly).